The primary structure comprises 211 residues: Endo-1,4-beta-xylanase 3 (211 aa).

Positions 1-27 are cleaved as a signal peptide; the sequence is MKVTAAFAGLLVTAFAAPVPEPVLVSR. Positions 28–210 constitute a GH11 domain; sequence SAGINYVQNY…GAGSASVTIS (183 aa). The Nucleophile role is filled by E106. The cysteines at positions 119 and 138 are disulfide-linked. The active-site Proton donor is the E197.

The protein belongs to the glycosyl hydrolase 11 (cellulase G) family.

It is found in the secreted. It carries out the reaction Endohydrolysis of (1-&gt;4)-beta-D-xylosidic linkages in xylans.. It functions in the pathway glycan degradation; xylan degradation. The protein is Endo-1,4-beta-xylanase 3 (xynC) of Aspergillus kawachii (strain NBRC 4308) (White koji mold).